We begin with the raw amino-acid sequence, 349 residues long: Protein Wnt-7a (349 aa).

An N-terminal signal peptide occupies residues 1–31; that stretch reads MNRKARRCLGHLFLSLGMVYLRIGGFSSVVA. Cystine bridges form between Cys-73/Cys-84, Cys-123/Cys-131, Cys-133/Cys-152, Cys-200/Cys-214, and Cys-202/Cys-209. N-linked (GlcNAc...) asparagine glycans are attached at residues Asn-83 and Asn-127. The O-palmitoleoyl serine; by PORCN moiety is linked to residue Ser-206. Residues 238–266 are disordered linker; it reads VEPVRASRNKRPTFLKIKKPLSYRKPMDT. Intrachain disulfides connect Cys-278-Cys-309, Cys-294-Cys-304, Cys-308-Cys-348, Cys-324-Cys-339, Cys-326-Cys-336, and Cys-331-Cys-332. Residue Asn-295 is glycosylated (N-linked (GlcNAc...) asparagine).

The protein belongs to the Wnt family. Forms a soluble 1:1 complex with AFM; this prevents oligomerization and is required for prolonged biological activity. The complex with AFM may represent the physiological form in body fluids. Interacts with PORCN. Interacts (via intrinsically disordered linker region) with RECK; interaction with RECK confers ligand selectivity for Wnt7 in brain endothelial cells and allows these cells to selectively respond to Wnt7. Interacts with FZD5. Post-translationally, palmitoleoylation is required for efficient binding to frizzled receptors. Depalmitoleoylation leads to Wnt signaling pathway inhibition.

The protein localises to the secreted. It is found in the extracellular space. Its subcellular location is the extracellular matrix. In terms of biological role, ligand for members of the frizzled family of seven transmembrane receptors that functions in the canonical Wnt/beta-catenin signaling pathway. Plays an important role in embryonic development, including dorsal versus ventral patterning during limb development, skeleton development and urogenital tract development. Required for central nervous system (CNS) angiogenesis and blood-brain barrier regulation. Required for normal, sexually dimorphic development of the Mullerian ducts, and for normal fertility in both sexes. Required for normal neural stem cell proliferation in the hippocampus dentate gyrus. Required for normal progress through the cell cycle in neural progenitor cells, for self-renewal of neural stem cells, and for normal neuronal differentiation and maturation. Promotes formation of synapses via its interaction with FZD5. This is Protein Wnt-7a (WNT7A) from Pongo pygmaeus (Bornean orangutan).